A 229-amino-acid polypeptide reads, in one-letter code: Prolactin (229 aa).

An N-terminal signal peptide occupies residues 1 to 30; the sequence is MDKKRSSLKGSLLLLLLLVSDLLLCKSVAS. A disulfide bridge links Cys34 with Cys41. Ser56 carries the phosphoserine modification. Residue Asn61 is glycosylated (N-linked (GlcNAc...) asparagine; partial). Residues Ser64 and Ser120 each carry the phosphoserine modification. 2 disulfides stabilise this stretch: Cys88/Cys204 and Cys221/Cys229.

Belongs to the somatotropin/prolactin family. In terms of assembly, interacts with PRLR.

The protein resides in the secreted. Its function is as follows. Prolactin acts primarily on the mammary gland by promoting lactation. The chain is Prolactin (PRL) from Equus caballus (Horse).